Here is a 335-residue protein sequence, read N- to C-terminus: Methionine import ATP-binding protein MetN 2 (335 aa).

The ABC transporter domain occupies 2–242 (IEFQNVHKTY…PEHPTTKRFV (241 aa)). Position 38–45 (38–45 (GHSGAGKS)) interacts with ATP.

This sequence belongs to the ABC transporter superfamily. Methionine importer (TC 3.A.1.24) family. The complex is composed of two ATP-binding proteins (MetN), two transmembrane proteins (MetI) and a solute-binding protein (MetQ).

Its subcellular location is the cell inner membrane. The catalysed reaction is L-methionine(out) + ATP + H2O = L-methionine(in) + ADP + phosphate + H(+). It carries out the reaction D-methionine(out) + ATP + H2O = D-methionine(in) + ADP + phosphate + H(+). In terms of biological role, part of the ABC transporter complex MetNIQ involved in methionine import. Responsible for energy coupling to the transport system. The chain is Methionine import ATP-binding protein MetN 2 from Pseudomonas entomophila (strain L48).